The sequence spans 357 residues: Serine proteinase inhibitor 1 (357 aa).

This sequence belongs to the serpin family. Poxviruses subfamily.

It is found in the host cytoplasm. In terms of biological role, plays a role in mediating viral host range. May act to inhibit a caspase independent form of apoptosis to allow efficient virus replication in infected cells. This is Serine proteinase inhibitor 1 (OPG208) from Monkeypox virus.